A 72-amino-acid chain; its full sequence is Translation initiation factor IF-1 (72 aa).

The S1-like domain maps to 1 to 72 (MSKNDVIEVE…TRGRIVYRFK (72 aa)).

The protein belongs to the IF-1 family. As to quaternary structure, component of the 30S ribosomal translation pre-initiation complex which assembles on the 30S ribosome in the order IF-2 and IF-3, IF-1 and N-formylmethionyl-tRNA(fMet); mRNA recruitment can occur at any time during PIC assembly.

The protein resides in the cytoplasm. One of the essential components for the initiation of protein synthesis. Stabilizes the binding of IF-2 and IF-3 on the 30S subunit to which N-formylmethionyl-tRNA(fMet) subsequently binds. Helps modulate mRNA selection, yielding the 30S pre-initiation complex (PIC). Upon addition of the 50S ribosomal subunit IF-1, IF-2 and IF-3 are released leaving the mature 70S translation initiation complex. This chain is Translation initiation factor IF-1, found in Desulforamulus reducens (strain ATCC BAA-1160 / DSM 100696 / MI-1) (Desulfotomaculum reducens).